The sequence spans 1765 residues: RANBP2-like and GRIP domain-containing protein 8 (1765 aa).

The residue at position 19 (Thr19) is a Phosphothreonine. The residue at position 21 (Ser21) is a Phosphoserine. TPR repeat units lie at residues 26-59 (SMKGFYFAKLYYEAKEYDLAKKYICTYINVQERD), 60-93 (PKAHRFLGLLYELEENTEKAVECYRRSVELNPTQ), and 648-681 (EDAHITFAILDAVNGNIEDAVTAFESIKSVVSYW). The interval 760 to 804 (GPLYKNGSLRNADSEIKHSTPSPTKYSLSPSKSYKYSPETPPRWT) is disordered. Over residues 778–797 (STPSPTKYSLSPSKSYKYSP) the composition is skewed to low complexity. In terms of domain architecture, RanBD1 1 spans 1036–1172 (HFEPVVQMPE…FEECQRLLLD (137 aa)). Disordered stretches follow at residues 1216-1247 (TEEENKGSGTGVAGASDTTIKPNAENTGPTLE) and 1306-1330 (AKLNQSGTSVGTDEESVVTQEEERD). A compositionally biased stretch (polar residues) spans 1231–1244 (SDTTIKPNAENTGP). Residues 1317–1329 (TDEESVVTQEEER) show a composition bias toward acidic residues. The 137-residue stretch at 1333–1469 (YFEPVVPLPD…FDEAKTAQEK (137 aa)) folds into the RanBD1 2 domain. Polar residues predominate over residues 1580–1593 (NNSETSSVAQSGSE). 2 disordered regions span residues 1580 to 1621 (NNSE…KNLS) and 1746 to 1765 (KGKLAAVAQDEEENPSRSSG). Positions 1594–1617 (SKVEPKKCELSKNSDIEQSSDSKV) are enriched in basic and acidic residues. Positions 1702–1752 (REKSAANLEYLKNVLLQFIFLKPGSERERLLPVINTMLQLSPEEKGKLAAV) constitute a GRIP domain.

In terms of assembly, interacts with GTP-bound ARL1.

The polypeptide is RANBP2-like and GRIP domain-containing protein 8 (RGPD8) (Homo sapiens (Human)).